Reading from the N-terminus, the 100-residue chain is Integration host factor subunit alpha (100 aa).

It belongs to the bacterial histone-like protein family. Heterodimer of an alpha and a beta chain.

Functionally, this protein is one of the two subunits of integration host factor, a specific DNA-binding protein that functions in genetic recombination as well as in transcriptional and translational control. Involved in hydrogenase gene expression. This is Integration host factor subunit alpha (ihfA) from Rhodobacter capsulatus (Rhodopseudomonas capsulata).